The primary structure comprises 122 residues: Large ribosomal subunit protein bL17 (122 aa).

Belongs to the bacterial ribosomal protein bL17 family. In terms of assembly, part of the 50S ribosomal subunit. Contacts protein L32.

The polypeptide is Large ribosomal subunit protein bL17 (Staphylococcus epidermidis (strain ATCC 35984 / DSM 28319 / BCRC 17069 / CCUG 31568 / BM 3577 / RP62A)).